Consider the following 198-residue polypeptide: C4b-binding protein beta chain (198 aa).

The first 17 residues, 1–17 (MFFWLMCYLVDVWLISA), serve as a signal peptide directing secretion. The 56-residue stretch at 22-77 (HCPDPLLVTDEFSSLEPVNVNDTFMFKCNEHCIFKGSNWSQCRENHTRVTHSPVSK) folds into the Sushi 1; atypical; lacks a Cys domain. Residues Asn-42, Asn-59, and Asn-66 are each glycosylated (N-linked (GlcNAc...) asparagine). One can recognise a Sushi 2 domain in the interval 79–135 (RDCGPPETPTHGYFEGRDFKSGSTITYYCEARYRLVGTQHQQCIDGEWTSAPPICEL). 2 disulfide bridges follow: Cys-81/Cys-121 and Cys-107/Cys-133.

As to quaternary structure, disulfide-linked complex of alpha and beta chains.

It localises to the secreted. Controls the classical pathway of complement activation. It binds as a cofactor to C3b/C4b inactivator (C3bINA), which then hydrolyzes the complement fragment C4b. It also accelerates the degradation of the C4bC2a complex (C3 convertase) by dissociating the complement fragment C2a. It also interacts with serum amyloid P component. The sequence is that of C4b-binding protein beta chain (C4BPB) from Bos taurus (Bovine).